We begin with the raw amino-acid sequence, 124 residues long: UPF0299 membrane protein VIBHAR_02118 (124 aa).

The next 4 helical transmembrane spans lie at 6-26 (LLQL…LGIG), 35-55 (VSVP…TLGL), 72-92 (MILL…MLLA), and 95-115 (LPII…LAWF).

This sequence belongs to the UPF0299 family.

It is found in the cell inner membrane. This is UPF0299 membrane protein VIBHAR_02118 from Vibrio campbellii (strain ATCC BAA-1116).